The primary structure comprises 427 residues: Zinc finger protein 134 (427 aa).

Lys-20 is covalently cross-linked (Glycyl lysine isopeptide (Lys-Gly) (interchain with G-Cter in SUMO2)). The C2H2-type 1 zinc finger occupies 50–72; that stretch reads LPCDICGPILKDILHLDEHQGTH. The segment at 78–100 adopts a C2H2-type 2; degenerate zinc-finger fold; that stretch reads HTCGACGRQFWFSANLHQYQKCY. Glycyl lysine isopeptide (Lys-Gly) (interchain with G-Cter in SUMO2) cross-links involve residues Lys-135 and Lys-139. 9 consecutive C2H2-type zinc fingers follow at residues 176-198, 204-226, 232-254, 260-282, 288-310, 316-338, 344-366, 372-394, and 400-422; these read YKCSECGKAFSRKDTLVQHQRIH, YECSECGKAFSRKATLVQHQRIH, YECSECGKTFSRKDNLTQHKRIH, YKCNECGKYFSHHSNLIVHQRVH, YKCSDCGKVFRHKSTLVQHESIH, YDCSDCGKSFGHKYTLIKHQRIH, FECIECGKFFSRSSDYIAHQRVH, FVCSKCGKDFIRTSHLVRHQRVH, and YECSECGKAYSLSSHLNRHQKVH.

Belongs to the krueppel C2H2-type zinc-finger protein family.

The protein localises to the nucleus. Functionally, may be involved in transcriptional regulation. This chain is Zinc finger protein 134 (ZNF134), found in Homo sapiens (Human).